The chain runs to 335 residues: Beta-ketoacyl-[acyl-carrier-protein] synthase III (335 aa).

Residues cysteine 117 and histidine 258 contribute to the active site. The interval 259-263 (QANQR) is ACP-binding. The active site involves asparagine 288.

Belongs to the thiolase-like superfamily. FabH family. In terms of assembly, homodimer.

The protein localises to the cytoplasm. The catalysed reaction is malonyl-[ACP] + acetyl-CoA + H(+) = 3-oxobutanoyl-[ACP] + CO2 + CoA. Its pathway is lipid metabolism; fatty acid biosynthesis. In terms of biological role, catalyzes the condensation reaction of fatty acid synthesis by the addition to an acyl acceptor of two carbons from malonyl-ACP. Catalyzes the first condensation reaction which initiates fatty acid synthesis and may therefore play a role in governing the total rate of fatty acid production. Possesses both acetoacetyl-ACP synthase and acetyl transacylase activities. Its substrate specificity determines the biosynthesis of branched-chain and/or straight-chain of fatty acids. This is Beta-ketoacyl-[acyl-carrier-protein] synthase III from Synechococcus elongatus (strain ATCC 33912 / PCC 7942 / FACHB-805) (Anacystis nidulans R2).